A 195-amino-acid polypeptide reads, in one-letter code: Der GTPase-activating protein YihI (195 aa).

The segment at 1 to 81 (MSRTKKTRRI…KAVVKEVKDP (81 aa)) is disordered. Basic and acidic residues-rich tracts occupy residues 9–23 (RITD…DKPK), 38–49 (TRYELDAQAREE), and 66–81 (DPAE…VKDP).

It belongs to the YihI family. Interacts with Der.

Its function is as follows. A GTPase-activating protein (GAP) that modifies Der/EngA GTPase function. May play a role in ribosome biogenesis. The protein is Der GTPase-activating protein YihI of Mannheimia haemolytica (Pasteurella haemolytica).